A 340-amino-acid polypeptide reads, in one-letter code: Glycerol-3-phosphate dehydrogenase [NAD(P)+] (340 aa).

Serine 14, phenylalanine 15, arginine 35, and lysine 108 together coordinate NADPH. Sn-glycerol 3-phosphate is bound by residues lysine 108 and glycine 136. An NADPH-binding site is contributed by alanine 140. Residues lysine 191, aspartate 244, serine 254, arginine 255, and asparagine 256 each coordinate sn-glycerol 3-phosphate. Residue lysine 191 is the Proton acceptor of the active site. Arginine 255 lines the NADPH pocket. NADPH is bound by residues valine 279 and glutamate 281.

The protein belongs to the NAD-dependent glycerol-3-phosphate dehydrogenase family.

The protein localises to the cytoplasm. The enzyme catalyses sn-glycerol 3-phosphate + NAD(+) = dihydroxyacetone phosphate + NADH + H(+). It catalyses the reaction sn-glycerol 3-phosphate + NADP(+) = dihydroxyacetone phosphate + NADPH + H(+). Its pathway is membrane lipid metabolism; glycerophospholipid metabolism. In terms of biological role, catalyzes the reduction of the glycolytic intermediate dihydroxyacetone phosphate (DHAP) to sn-glycerol 3-phosphate (G3P), the key precursor for phospholipid synthesis. The protein is Glycerol-3-phosphate dehydrogenase [NAD(P)+] of Azotobacter vinelandii (strain DJ / ATCC BAA-1303).